Here is a 1458-residue protein sequence, read N- to C-terminus: DNA polymerase alpha catalytic subunit (1458 aa).

Disordered stretches follow at residues 1–25 (MSDS…RKEA) and 89–119 (DLED…SVSK). The segment covering 15–25 (EKTEKSGRKEA) has biased composition (basic and acidic residues). 2 DNA-binding regions span residues 650–715 (RINS…VHQI) and 1241–1373 (QFRA…ACSK). The Zn(2+) site is built by Cys1280, Cys1283, Cys1307, Cys1312, Cys1345, Cys1350, Cys1368, and Cys1371. Residues 1280–1310 (CPKCGTENIYDNVFDGSGLQIEPGLKRCSKP) form a CysA-type zinc finger. Positions 1345–1371 (CEEKTCQNRTRRLPLSFSRNGPICQAC) match the CysB motif motif.

The protein belongs to the DNA polymerase type-B family. As to quaternary structure, the DNA polymerase alpha complex is composed of four subunits: the catalytic subunit POLA1, the regulatory subunit POLA2, and the small and the large primase subunits PRIM1 and PRIM2 respectively. Interacts with PARP1; this interaction functions as part of the control of replication fork progression. Interacts with MCM10 and WDHD1; these interactions recruit the polymerase alpha complex to the pre-replicative complex bound to DNA. Interacts with RPA1; this interaction stabilizes the replicative complex and reduces the misincorporation rate of DNA polymerase alpha by acting as a fidelity clamp.

The protein resides in the nucleus. It catalyses the reaction DNA(n) + a 2'-deoxyribonucleoside 5'-triphosphate = DNA(n+1) + diphosphate. Plays an essential role in the initiation of DNA replication. During the S phase of the cell cycle, the DNA polymerase alpha complex (composed of a catalytic subunit POLA1/p180, a regulatory subunit POLA2/p70 and two primase subunits PRIM1/p49 and PRIM2/p58) is recruited to DNA at the replicative forks via direct interactions with MCM10 and WDHD1. The primase subunit of the polymerase alpha complex initiates DNA synthesis by oligomerising short RNA primers on both leading and lagging strands. These primers are initially extended by the polymerase alpha catalytic subunit and subsequently transferred to polymerase delta and polymerase epsilon for processive synthesis on the lagging and leading strand, respectively. The reason this transfer occurs is because the polymerase alpha has limited processivity and lacks intrinsic 3' exonuclease activity for proofreading error, and therefore is not well suited for replicating long complexes. This chain is DNA polymerase alpha catalytic subunit (pola1), found in Xenopus laevis (African clawed frog).